Consider the following 79-residue polypeptide: Conotoxin VnMKLT1-01122 (79 aa).

The first 22 residues, 1-22 (MKLTCMKIVAVLFLTAWTFVTA), serve as a signal peptide directing secretion. Positions 23-48 (DDSRNGLEYLFPKAHYEMNPEASKLN) are excised as a propeptide. Gln51 bears the Pyrrolidone carboxylic acid mark. 3 cysteine pairs are disulfide-bonded: Cys53-Cys70, Cys60-Cys74, and Cys69-Cys78.

The protein belongs to the conotoxin O1 superfamily. Expressed by the venom duct.

The protein localises to the secreted. The chain is Conotoxin VnMKLT1-01122 from Conus ventricosus (Mediterranean cone).